The primary structure comprises 374 residues: Biotin synthase (374 aa).

A Radical SAM core domain is found at Asn49–Arg276. Positions 64, 68, and 71 each coordinate [4Fe-4S] cluster. [2Fe-2S] cluster is bound by residues Cys108, Cys139, Cys199, and Arg271. Residues Gln344–Ala374 are disordered.

The protein belongs to the radical SAM superfamily. Biotin synthase family. In terms of assembly, homodimer. [4Fe-4S] cluster serves as cofactor. [2Fe-2S] cluster is required as a cofactor.

The catalysed reaction is (4R,5S)-dethiobiotin + (sulfur carrier)-SH + 2 reduced [2Fe-2S]-[ferredoxin] + 2 S-adenosyl-L-methionine = (sulfur carrier)-H + biotin + 2 5'-deoxyadenosine + 2 L-methionine + 2 oxidized [2Fe-2S]-[ferredoxin]. The protein operates within cofactor biosynthesis; biotin biosynthesis; biotin from 7,8-diaminononanoate: step 2/2. Catalyzes the conversion of dethiobiotin (DTB) to biotin by the insertion of a sulfur atom into dethiobiotin via a radical-based mechanism. This Alteromonas mediterranea (strain DSM 17117 / CIP 110805 / LMG 28347 / Deep ecotype) protein is Biotin synthase.